Consider the following 458-residue polypeptide: ATP synthase subunit beta (458 aa).

148–155 (GGAGVGKT) serves as a coordination point for ATP.

It belongs to the ATPase alpha/beta chains family. As to quaternary structure, F-type ATPases have 2 components, CF(1) - the catalytic core - and CF(0) - the membrane proton channel. CF(1) has five subunits: alpha(3), beta(3), gamma(1), delta(1), epsilon(1). CF(0) has three main subunits: a(1), b(2) and c(9-12). The alpha and beta chains form an alternating ring which encloses part of the gamma chain. CF(1) is attached to CF(0) by a central stalk formed by the gamma and epsilon chains, while a peripheral stalk is formed by the delta and b chains.

It localises to the cell inner membrane. It carries out the reaction ATP + H2O + 4 H(+)(in) = ADP + phosphate + 5 H(+)(out). Produces ATP from ADP in the presence of a proton gradient across the membrane. The catalytic sites are hosted primarily by the beta subunits. The chain is ATP synthase subunit beta from Shewanella piezotolerans (strain WP3 / JCM 13877).